Reading from the N-terminus, the 387-residue chain is Patatin-13 (387 aa).

An N-terminal signal peptide occupies residues 1-23; it reads MATTKSVLVLIFMILATTSSTFA. The PNPLA domain occupies 32 to 230; the sequence is LSVDGGGIKG…TVADPALLSV (199 aa). The GXGXXG motif lies at 36 to 41; it reads GGGIKG. Residues 75–79 carry the GXSXG motif; the sequence is GTSTG. Ser-77 (nucleophile) is an active-site residue. Asn-115 and Asn-203 each carry an N-linked (GlcNAc...) asparagine glycan. Residue Asp-216 is the Proton acceptor of the active site. The short motif at 216–218 is the DGA/G element; sequence DGA. A coiled-coil region spans residues 361 to 385; it reads ETYEEALKRFAKLLSDRKKLRANKA.

It belongs to the patatin family. As to expression, tuber.

Its subcellular location is the vacuole. Probable lipolytic acyl hydrolase (LAH), an activity which is thought to be involved in the response of tubers to pathogens. The sequence is that of Patatin-13 from Solanum tuberosum (Potato).